A 629-amino-acid chain; its full sequence is MGLPKGPEGQGLPEVETREDEEQNVKLTEILELLVAAGYFRARIKGLSPFDKVVGGMTWCITTCSFDVDVDLLFQENSTIGQKIALSEKIVSVLPRMKCPHQLEPHQIQGMDFIHIFPVVQWLVKRAIETKEEMGDYIRSYSISQFQKTYSLPEDDDFIKRKDKAVKTVVGLSDAYKPRRKYRRQRGAEELPDEESRVHSTLLEYGRRYGFSRQSKTEKAEDKKTALAAGLSAAEKVDAHEEDELQAAEEQRIQSLMTKMTAMANEESRLTASSVGQIVGLCSEEIKQIVSEYAGKQSELSAEESPEKLGTSQLHQRKVISLNKQILQKSKHLEELQANHTSLKAKYSDRKKTLTELKDHGEKLDKEQAALEKLEAKADPSMLQNLRALVAMNESLKSQEQEFKAHCREEMARLQQEIETLKAERAPGEKIISGGEPQGALTSTMTHNEDLDRRYNMEKEKLYKIRLLQARRNREIAILHRKIDEVPSRAELIQYQKRFIELYRQISAVHKETKQFFTLYNTLDDKKVYLEKEISLLNSIHENFSQAMASPAARDQFLRQMEQIVEGIKQSRMKMEKKKQENKMRRDQLNDQYLELLEKQRLYFKTVKEFKEEGRKNELLLSKIKAKAS.

The interval 1–23 (MGLPKGPEGQGLPEVETREDEEQ) is disordered. A sufficient for interaction with CCDC22 region spans residues 1–428 (MGLPKGPEGQ…ETLKAERAPG (428 aa)). 2 coiled-coil regions span residues 231-430 (LSAA…PGEK) and 558-599 (LRQM…LLEK). Serine 298, serine 301, and serine 305 each carry phosphoserine. A sufficient for interaction with WASHC2C region spans residues 446 to 629 (THNEDLDRRY…LLSKIKAKAS (184 aa)).

It belongs to the CCDC93 family. In terms of assembly, component of the commander complex consisting of the CCC subcomplex and the retriever subcomplex. Component of the CCC (COMMD/CCDC22/CCDC93) subcomplex consisting of COMMD1, COMMD2, COMMD3, COMMD4, COMMD5, COMMD6, COMMD7, COMMD8, COMMD9, COMMD10, CCDC22 and CCDC93. Forms a coiled-coil heterodimer with CCDC22; this heterodimer interacts with the guanine nucleotide exchange factor DENND10; the interaction is direct. Interacts with WASHC1. Interacts directly with WASHC2C. Interacts with SNX17 and SNX31.

The protein resides in the early endosome. In terms of biological role, component of the commander complex that is essential for endosomal recycling of transmembrane cargos; the commander complex is composed of composed of the CCC subcomplex and the retriever subcomplex. Component of the CCC complex, which is involved in the regulation of endosomal recycling of surface proteins, including integrins, signaling receptor and channels. The CCC complex associates with SNX17, retriever and WASH complexes to prevent lysosomal degradation and promote cell surface recycling of numerous cargos such as integrins ITGA5:ITGB1. Involved in copper-dependent ATP7A trafficking between the trans-Golgi network and vesicles in the cell periphery; the function is proposed to depend on its association within the CCC complex and cooperation with the WASH complex on early endosomes and is dependent on its interaction with WASHC2C. The sequence is that of Coiled-coil domain-containing protein 93 (Ccdc93) from Mus musculus (Mouse).